The sequence spans 94 residues: MNKYELTYILKSETDEEKRNQLAEKFKGIIEADGAVENVDEWGNRKLAYEIDKRNEGYYVLVNFASSIDVPKELDRNLKIAEQVIRHMIIRIQE.

The protein belongs to the bacterial ribosomal protein bS6 family.

Functionally, binds together with bS18 to 16S ribosomal RNA. This Alkaliphilus metalliredigens (strain QYMF) protein is Small ribosomal subunit protein bS6.